The sequence spans 352 residues: Photosystem II D2 protein (352 aa).

A helical membrane pass occupies residues 40–60; the sequence is CAYLALGGWLTGTTFVTSWYT. Histidine 117 lines the chlorophyll a pocket. Residues 124–140 traverse the membrane as a helical segment; sequence GFMLRQFEIARLVGVRP. 2 residues coordinate pheophytin a: glutamine 129 and asparagine 142. The helical transmembrane segment at 152–165 threads the bilayer; sequence VFVSVFLIYPLGQS. Residue histidine 197 participates in chlorophyll a binding. A helical membrane pass occupies residues 207-227; that stretch reads GALLCAIHGATVENTLYKDGE. A plastoquinone is bound by residues histidine 214 and phenylalanine 261. Histidine 214 provides a ligand contact to Fe cation. Histidine 268 is a Fe cation binding site. The chain crosses the membrane as a helical span at residues 278 to 294; it reads GLWMSSIGVVGLALNLR.

The protein belongs to the reaction center PufL/M/PsbA/D family. In terms of assembly, PSII is composed of 1 copy each of membrane proteins PsbA, PsbB, PsbC, PsbD, PsbE, PsbF, PsbH, PsbI, PsbJ, PsbK, PsbL, PsbM, PsbT, PsbX, PsbY, PsbZ, Psb30/Ycf12, peripheral proteins PsbO, CyanoQ (PsbQ), PsbU, PsbV and a large number of cofactors. It forms dimeric complexes. The D1/D2 heterodimer binds P680, chlorophylls that are the primary electron donor of PSII, and subsequent electron acceptors. It shares a non-heme iron and each subunit binds pheophytin, quinone, additional chlorophylls, carotenoids and lipids. There is also a Cl(-1) ion associated with D1 and D2, which is required for oxygen evolution. The PSII complex binds additional chlorophylls, carotenoids and specific lipids. serves as cofactor.

The protein localises to the cellular thylakoid membrane. It catalyses the reaction 2 a plastoquinone + 4 hnu + 2 H2O = 2 a plastoquinol + O2. Photosystem II (PSII) is a light-driven water:plastoquinone oxidoreductase that uses light energy to abstract electrons from H(2)O, generating O(2) and a proton gradient subsequently used for ATP formation. It consists of a core antenna complex that captures photons, and an electron transfer chain that converts photonic excitation into a charge separation. The D1/D2 (PsbA/PsbD) reaction center heterodimer binds P680, the primary electron donor of PSII as well as several subsequent electron acceptors. D2 is needed for assembly of a stable PSII complex. This chain is Photosystem II D2 protein, found in Synechococcus sp. (strain JA-3-3Ab) (Cyanobacteria bacterium Yellowstone A-Prime).